The following is a 340-amino-acid chain: Ketol-acid reductoisomerase (NADP(+)) (340 aa).

Residues 3-182 (VQMEYEKDVK…GAARVGLLET (180 aa)) enclose the KARI N-terminal Rossmann domain. NADP(+) is bound by residues 26-29 (YGSQ), Arg-49, Ser-53, and 83-86 (DEIQ). His-108 is a catalytic residue. An NADP(+)-binding site is contributed by Gly-134. One can recognise a KARI C-terminal knotted domain in the interval 183–328 (TYKEETEEDL…AELRKAMPFV (146 aa)). Mg(2+) is bound by residues Asp-191, Glu-195, Glu-227, and Glu-231. Ser-252 is a binding site for substrate.

It belongs to the ketol-acid reductoisomerase family. Mg(2+) is required as a cofactor.

The enzyme catalyses (2R)-2,3-dihydroxy-3-methylbutanoate + NADP(+) = (2S)-2-acetolactate + NADPH + H(+). The catalysed reaction is (2R,3R)-2,3-dihydroxy-3-methylpentanoate + NADP(+) = (S)-2-ethyl-2-hydroxy-3-oxobutanoate + NADPH + H(+). The protein operates within amino-acid biosynthesis; L-isoleucine biosynthesis; L-isoleucine from 2-oxobutanoate: step 2/4. Its pathway is amino-acid biosynthesis; L-valine biosynthesis; L-valine from pyruvate: step 2/4. In terms of biological role, involved in the biosynthesis of branched-chain amino acids (BCAA). Catalyzes an alkyl-migration followed by a ketol-acid reduction of (S)-2-acetolactate (S2AL) to yield (R)-2,3-dihydroxy-isovalerate. In the isomerase reaction, S2AL is rearranged via a Mg-dependent methyl migration to produce 3-hydroxy-3-methyl-2-ketobutyrate (HMKB). In the reductase reaction, this 2-ketoacid undergoes a metal-dependent reduction by NADPH to yield (R)-2,3-dihydroxy-isovalerate. The protein is Ketol-acid reductoisomerase (NADP(+)) of Streptococcus pneumoniae (strain CGSP14).